A 523-amino-acid chain; its full sequence is 3-hydroxybenzoate--CoA ligase (523 aa).

The protein belongs to the ATP-dependent AMP-binding enzyme family. Benzoate-CoA ligase subfamily.

It catalyses the reaction 3-hydroxybenzoate + ATP + CoA = 3-hydroxybenzoyl-CoA + AMP + diphosphate. It carries out the reaction 4-hydroxybenzoate + ATP + CoA = 4-hydroxybenzoyl-CoA + AMP + diphosphate. Functionally, ligase involved in the anaerobic degradation of 3-hydroxybenzoate (3OHBz). Catalyzes the activation of 3-hydroxybenzoate to 3-hydroxybenzoyl-CoA. Also shows high activity with protocatechuate and 4-hydroxybenzoate. Exhibits lower activity with benzoate, but cannot use 2-hydroxybenzoate or benzoate analogs containing other substituents at the ortho position, such as 2-aminobenzoate (anthranilate). The protein is 3-hydroxybenzoate--CoA ligase of Aromatoleum sp. (strain CIB) (Azoarcus sp. (strain CIB)).